A 72-amino-acid chain; its full sequence is uncharacterized protein (72 aa).

Residues 1-12 are Cytoplasmic-facing; that stretch reads MSKHKHEWTESV. Residues 13–32 traverse the membrane as a helical segment; that stretch reads ANSGPASILSYCASSILMTV. The Lumenal portion of the chain corresponds to 33–46; the sequence is TNKFVVNLDNFNMN. A helical transmembrane segment spans residues 47 to 69; it reads FVMLFVQSLVCTVTLCILRIVGV. The Cytoplasmic segment spans residues 70–72; sequence ANF.

Belongs to the TPT transporter family. SLC35D subfamily.

The protein localises to the membrane. This is an uncharacterized protein from Saccharomyces cerevisiae (strain RM11-1a) (Baker's yeast).